Consider the following 309-residue polypeptide: Shugoshin (309 aa).

Residues 42 to 77 are a coiled coil; that stretch reads NLLLKQQVVQCTKTIEKLRNENVALRQKNQELIDGT. 2 disordered regions span residues 165-195 and 210-309; these read FDNN…KGRR and EEAS…NTFF. The span at 167–178 shows a compositional bias: low complexity; the sequence is NNSSQSTSSIQN. A compositionally biased stretch (basic residues) spans 184–193; it reads PRKKQSVGKG.

Belongs to the shugoshin family. As to expression, expressed in gonads.

The protein localises to the nucleus. The protein resides in the chromosome. It localises to the centromere. Functionally, component of cell cycle checkpoints, which ensures chromosome segregation during meiosis and mitosis. During meiotic prophase, it is involved in the regulation of the synapsis checkpoint, which monitors whether homologous chromosomes have synapsed, and the DNA damage response. Plays a central role in chromosome cohesion during cell division by preventing premature dissociation of cohesin complex after prophase, when most of cohesin complex dissociates from chromosomes arms. This chain is Shugoshin, found in Caenorhabditis elegans.